Reading from the N-terminus, the 351-residue chain is L-threonine 3-dehydrogenase (351 aa).

Position 39 (Cys-39) interacts with Zn(2+). Residues Thr-41 and His-44 each act as charge relay system in the active site. His-64, Glu-65, Cys-94, Cys-97, Cys-100, and Cys-108 together coordinate Zn(2+). Residues Ile-176, Asp-196, Arg-201, 271-273 (LGI), and 295-296 (IY) each bind NAD(+).

The protein belongs to the zinc-containing alcohol dehydrogenase family. As to quaternary structure, homotetramer. The cofactor is Zn(2+).

The protein resides in the cytoplasm. The catalysed reaction is L-threonine + NAD(+) = (2S)-2-amino-3-oxobutanoate + NADH + H(+). The protein operates within amino-acid degradation; L-threonine degradation via oxydo-reductase pathway; glycine from L-threonine: step 1/2. Catalyzes the NAD(+)-dependent oxidation of L-threonine to 2-amino-3-ketobutyrate. The protein is L-threonine 3-dehydrogenase of Francisella tularensis subsp. novicida (strain U112).